The sequence spans 251 residues: MSEATALSPAEFEQALRAKGAYYHIYHPFHVAMYEGRATREQIQGWVANRFYYQVNIPLKDAAILANCPDREIRREWIQRLLDHDGAPGEDGGIEAWLRLGEAVGLDPDQLRSQELVLPGVRFAVDAYVNFARRANWQEAASSSLTELFAPQIHQSRLDSWPQHYPWIDPTGYEYFRTRLGQARRDVEHGLAITLQHYTTYEGQQRMLEILQFKLDILWSMLDAMSMAYELNRPPYHSVTDQKVWHKGITP.

This sequence belongs to the PqqC family.

It catalyses the reaction 6-(2-amino-2-carboxyethyl)-7,8-dioxo-1,2,3,4,7,8-hexahydroquinoline-2,4-dicarboxylate + 3 O2 = pyrroloquinoline quinone + 2 H2O2 + 2 H2O + H(+). It functions in the pathway cofactor biosynthesis; pyrroloquinoline quinone biosynthesis. Functionally, ring cyclization and eight-electron oxidation of 3a-(2-amino-2-carboxyethyl)-4,5-dioxo-4,5,6,7,8,9-hexahydroquinoline-7,9-dicarboxylic-acid to PQQ. The polypeptide is Pyrroloquinoline-quinone synthase (Pseudomonas syringae pv. tomato (strain ATCC BAA-871 / DC3000)).